Reading from the N-terminus, the 78-residue chain is MPRIYKVIGETTTGMKFKLEVLGEKPYDAIEKAYSLIGSRHKLSRTQIRIKDVVVISPEDASSEEVKLLMSIDKVIKY.

This sequence belongs to the eukaryotic ribosomal protein eL20 family. As to quaternary structure, part of the 50S ribosomal subunit. Binds 23S rRNA.

The chain is Large ribosomal subunit protein eL20 from Pyrobaculum aerophilum (strain ATCC 51768 / DSM 7523 / JCM 9630 / CIP 104966 / NBRC 100827 / IM2).